The following is a 349-amino-acid chain: Succinylglutamate desuccinylase (349 aa).

Zn(2+)-binding residues include H70, E73, and H166. The active site involves E229.

It belongs to the AspA/AstE family. Succinylglutamate desuccinylase subfamily. Zn(2+) is required as a cofactor.

It carries out the reaction N-succinyl-L-glutamate + H2O = L-glutamate + succinate. Its pathway is amino-acid degradation; L-arginine degradation via AST pathway; L-glutamate and succinate from L-arginine: step 5/5. Transforms N(2)-succinylglutamate into succinate and glutamate. The protein is Succinylglutamate desuccinylase of Burkholderia mallei (strain ATCC 23344).